The primary structure comprises 774 residues: Polyribonucleotide nucleotidyltransferase (774 aa).

Mg(2+) is bound by residues Asp485 and Asp491. The KH domain maps to 552 to 611 (PRIETMSVPKDKIRDIIGTGGKIIREIVATTGAKVDIDDDGTVKISSSDTAQIEAARNWI). The S1 motif domain occupies 621–689 (GKIYTGKVVN…NRGKVRLSMR (69 aa)). The segment at 689-774 (RVVDQETGEE…APAFLTRDDD (86 aa)) is disordered. Residues 700–755 (PDTRPPREERPRGDRGDRGDRGPRRDGDRRREGGDRGPRRDRGDRGDRPRRERSEG) show a composition bias toward basic and acidic residues.

The protein belongs to the polyribonucleotide nucleotidyltransferase family. Requires Mg(2+) as cofactor.

It is found in the cytoplasm. It catalyses the reaction RNA(n+1) + phosphate = RNA(n) + a ribonucleoside 5'-diphosphate. Its function is as follows. Involved in mRNA degradation. Catalyzes the phosphorolysis of single-stranded polyribonucleotides processively in the 3'- to 5'-direction. This chain is Polyribonucleotide nucleotidyltransferase, found in Rhizorhabdus wittichii (strain DSM 6014 / CCUG 31198 / JCM 15750 / NBRC 105917 / EY 4224 / RW1) (Sphingomonas wittichii).